The chain runs to 514 residues: ATP synthase subunit alpha (514 aa).

170–177 (GDRQIGKT) provides a ligand contact to ATP.

The protein belongs to the ATPase alpha/beta chains family. F-type ATPases have 2 components, CF(1) - the catalytic core - and CF(0) - the membrane proton channel. CF(1) has five subunits: alpha(3), beta(3), gamma(1), delta(1), epsilon(1). CF(0) has three main subunits: a(1), b(2) and c(9-12). The alpha and beta chains form an alternating ring which encloses part of the gamma chain. CF(1) is attached to CF(0) by a central stalk formed by the gamma and epsilon chains, while a peripheral stalk is formed by the delta and b chains.

The protein resides in the cell inner membrane. The catalysed reaction is ATP + H2O + 4 H(+)(in) = ADP + phosphate + 5 H(+)(out). Produces ATP from ADP in the presence of a proton gradient across the membrane. The alpha chain is a regulatory subunit. This is ATP synthase subunit alpha from Pseudomonas putida (strain ATCC 47054 / DSM 6125 / CFBP 8728 / NCIMB 11950 / KT2440).